The following is a 122-amino-acid chain: Large ribosomal subunit protein uL14 (122 aa).

It belongs to the universal ribosomal protein uL14 family. In terms of assembly, part of the 50S ribosomal subunit. Forms a cluster with proteins L3 and L19. In the 70S ribosome, L14 and L19 interact and together make contacts with the 16S rRNA in bridges B5 and B8.

In terms of biological role, binds to 23S rRNA. Forms part of two intersubunit bridges in the 70S ribosome. The protein is Large ribosomal subunit protein uL14 of Renibacterium salmoninarum (strain ATCC 33209 / DSM 20767 / JCM 11484 / NBRC 15589 / NCIMB 2235).